The chain runs to 540 residues: Ecdysone 20-monooxygenase (540 aa).

Residue C488 coordinates heme.

The protein belongs to the cytochrome P450 family. Heme is required as a cofactor. In terms of tissue distribution, strong expression by embryonic stage 10 in epidermis, decreases significantly in older embryos. Third instar larvae show expression in the midgut copper cells, Malpighian tubules and fat body. In the adult ovaries, expression is seen in both nurse cells and centripetally migrating follicle cells.

The protein resides in the mitochondrion membrane. The catalysed reaction is ecdysone + AH2 + O2 = 20-hydroxyecdysone + A + H2O. The protein operates within steroid biosynthesis; ecdysteroid biosynthesis. In terms of biological role, required for CNS development; midline glial cells. Involved in the metabolism of insect hormones; responsible for all ecdysone 20-monooxygenase activity during embryonic, larval and adult stages. May be involved in the breakdown of synthetic insecticides. The protein is Ecdysone 20-monooxygenase (shd) of Drosophila melanogaster (Fruit fly).